The following is a 329-amino-acid chain: Bifunctional nuclease 2 (329 aa).

The BFN domain maps to Cys121–Val256. Residues Asp287–Lys322 form the UVR domain.

This sequence belongs to the bifunctional nuclease family.

It is found in the nucleus. Bifunctional nuclease with both RNase and DNase activities. Involved in basal defense response. Participates in abscisic acid-derived callose deposition following infection by a necrotrophic pathogen. The sequence is that of Bifunctional nuclease 2 (BBD2) from Arabidopsis thaliana (Mouse-ear cress).